We begin with the raw amino-acid sequence, 460 residues long: Elongation factor 1-alpha (460 aa).

Position 2 is a n,N,N-trimethylglycine (glycine 2). Residue lysine 3 is modified to N6,N6-dimethyllysine; alternate. Position 3 is an N6-methyllysine; alternate (lysine 3). The tr-type G domain occupies 6–241; the sequence is KTHINVVVIG…DSIEPPKRPT (236 aa). The segment at 15-22 is G1; it reads GHVDSGKS. 15-22 lines the GTP pocket; sequence GHVDSGKS. Residues 71–75 are G2; that stretch reads GITID. An N6,N6,N6-trimethyllysine modification is found at lysine 80. The interval 92 to 95 is G3; that stretch reads DAPG. GTP is bound by residues 92–96 and 154–157; these read DAPGH and NKMD. Positions 154–157 are G4; that stretch reads NKMD. Positions 193 to 195 are G5; it reads SGF. An N6,N6-dimethyllysine; alternate modification is found at lysine 317. Residue lysine 317 is modified to N6-methyllysine; alternate. Residue lysine 391 is modified to N6-methyllysine.

Belongs to the TRAFAC class translation factor GTPase superfamily. Classic translation factor GTPase family. EF-Tu/EF-1A subfamily.

It localises to the cytoplasm. Functionally, this protein promotes the GTP-dependent binding of aminoacyl-tRNA to the A-site of ribosomes during protein biosynthesis. In Hypocrea jecorina (Trichoderma reesei), this protein is Elongation factor 1-alpha (tef1).